We begin with the raw amino-acid sequence, 197 residues long: UPF0301 protein A2cp1_4106 (197 aa).

Belongs to the UPF0301 (AlgH) family.

The sequence is that of UPF0301 protein A2cp1_4106 from Anaeromyxobacter dehalogenans (strain 2CP-1 / ATCC BAA-258).